Consider the following 318-residue polypeptide: Probable endolytic peptidoglycan transglycosylase RlpA (318 aa).

A signal peptide spans 1–21; the sequence is MMDKRVVAVAAVLWNVQMLFA. A disordered region spans residues 121–191; the sequence is DPNAHASQQR…GVANTTDVPA (71 aa). A compositionally biased stretch (polar residues) spans 125–137; sequence HASQQRNDRQTSP.

This sequence belongs to the RlpA family.

In terms of biological role, lytic transglycosylase with a strong preference for naked glycan strands that lack stem peptides. The polypeptide is Probable endolytic peptidoglycan transglycosylase RlpA (Treponema pallidum (strain Nichols)).